Here is a 248-residue protein sequence, read N- to C-terminus: Meiotically up-regulated gene 65 protein (248 aa).

Its function is as follows. Has a role in meiosis. In Schizosaccharomyces pombe (strain 972 / ATCC 24843) (Fission yeast), this protein is Meiotically up-regulated gene 65 protein (mug65).